Here is a 1081-residue protein sequence, read N- to C-terminus: Serine/threonine-protein kinase PKH2 (1081 aa).

Residue S138 is modified to Phosphoserine. Residues 179 to 443 (FKFGSVIGDG…ISQIKEHHFF (265 aa)) enclose the Protein kinase domain. Residues 189-191 (AYS) and K208 contribute to the ATP site. The PIF-pocket stretch occupies residues 210–255 (LNKEYLIRQKKVKYVSIEKTALQKLNNSPSVVRLFSTFQDESSLYF). ATP is bound by residues 258 to 260 (EYA) and D264. Residue D303 is the Proton acceptor of the active site. Positions 307 and 321 each coordinate ATP. Positions 494 to 526 (HLVTQRSASSPSVEETTHSTLYNNNTHASTESE) are enriched in polar residues. Disordered regions lie at residues 494–652 (HLVT…TYQM), 805–833 (NRSG…NKGS), and 970–1017 (IERR…INSA). The span at 527–538 (ISIKKRPTDERT) shows a compositional bias: basic and acidic residues. Low complexity-rich tracts occupy residues 564–575 (AASAALAASAAL) and 582–602 (SYPT…TSRP). S619 is modified (phosphoserine). Residues 632-645 (PMPPYTPPMSPPMT) show a composition bias toward pro residues. Polar residues-rich tracts occupy residues 805-819 (NRSG…NSSP) and 998-1017 (HSQS…INSA). S1009 bears the Phosphoserine mark.

This sequence belongs to the protein kinase superfamily. AGC Ser/Thr protein kinase family. PDPK1 subfamily.

It localises to the nucleus. The protein localises to the cytoplasm. It is found in the cell cortex. The enzyme catalyses L-seryl-[protein] + ATP = O-phospho-L-seryl-[protein] + ADP + H(+). It carries out the reaction L-threonyl-[protein] + ATP = O-phospho-L-threonyl-[protein] + ADP + H(+). Sphingoid base activates kinase activity. Serine/threonine-protein kinase which is part sphingolipid-mediated signaling pathway that is required for the internalization step of endocytosis by regulating eisosome assembly and organization, and modulating the organization of the plasma membrane. Phosphorylates and activates PKC1. Activates YPK1 and YPK2, 2 components of signaling cascade required for maintenance of cell wall integrity. Required for stress-induced P-body assembly and regulates global mRNA decay at the deadenylation step. This chain is Serine/threonine-protein kinase PKH2 (PKH2), found in Saccharomyces cerevisiae (strain ATCC 204508 / S288c) (Baker's yeast).